Reading from the N-terminus, the 129-residue chain is Lysozyme C, milk isozyme (129 aa).

Positions 1–129 (KVFSKCELAH…LSEYLASCNL (129 aa)) constitute a C-type lysozyme domain. 4 cysteine pairs are disulfide-bonded: Cys6-Cys127, Cys30-Cys115, Cys65-Cys80, and Cys76-Cys94. Catalysis depends on residues Glu35 and Asp53. Residues Lys82, Asp85, Asn87, Asp90, and Asp91 each coordinate Ca(2+).

Belongs to the glycosyl hydrolase 22 family. As to quaternary structure, monomer. It depends on Ca(2+) as a cofactor.

The enzyme catalyses Hydrolysis of (1-&gt;4)-beta-linkages between N-acetylmuramic acid and N-acetyl-D-glucosamine residues in a peptidoglycan and between N-acetyl-D-glucosamine residues in chitodextrins.. In terms of biological role, lysozymes have primarily a bacteriolytic function; those in tissues and body fluids are associated with the monocyte-macrophage system and enhance the activity of immunoagents. The sequence is that of Lysozyme C, milk isozyme (LYZ) from Equus caballus (Horse).